The following is an 888-amino-acid chain: Patched domain-containing protein 1 (888 aa).

A helical membrane pass occupies residues 20–40 (FIASHPVFFASAPVLISILLG). N-linked (GlcNAc...) asparagine glycosylation is found at Asn-77, Asn-133, and Asn-167. Residues 268–427 (SERYLVTSLI…LSFYGSSLVF (160 aa)) form the SSD domain. A run of 2 helical transmembrane segments spans residues 273–293 (VTSL…QDCV) and 298–318 (WLGL…AGII). N-linked (GlcNAc...) asparagine glycosylation is found at Asn-319 and Asn-326. 4 consecutive transmembrane segments (helical) span residues 328-348 (TFLG…FEML), 373-393 (LSFS…ASPF), 407-427 (CIAI…SLVF), and 502-522 (PFVV…YLQV). Asn-568, Asn-599, and Asn-608 each carry an N-linked (GlcNAc...) asparagine glycan. 2 consecutive transmembrane segments (helical) span residues 707-727 (ALFL…NVWI) and 738-758 (VIGF…LCLI). The N-linked (GlcNAc...) asparagine glycan is linked to Asn-762. The chain crosses the membrane as a helical span at residues 795-815 (GVAILQSYLCYIVGLIPLAAV). Asn-818 carries an N-linked (GlcNAc...) asparagine glycan. Residues 826-846 (CLFLIAFVTFFHCFAILPVIL) form a helical membrane-spanning segment.

This sequence belongs to the patched family. Widely expressed, including in various regions of the brain with highest expression in the gray and white cerebellum, followed by the cerebellar vermis and the pituitary gland.

The protein localises to the cell membrane. Its subcellular location is the cell projection. It localises to the dendritic spine. Required for the development and function of the thalamic reticular nucleus (TRN), a part of the thalamus that is critical for thalamocortical transmission, generation of sleep rhythms, sensorimotor processing and attention. Can bind cholesterol in vitro. The chain is Patched domain-containing protein 1 from Homo sapiens (Human).